A 596-amino-acid chain; its full sequence is Choline dehydrogenase, mitochondrial (596 aa).

The N-terminal 34 residues, 1–34, are a transit peptide targeting the mitochondrion; that stretch reads MWQVLRGWRKGWQSPRGALAWAVQGQPCPPCSRA. Residue 44-73 coordinates FAD; it reads TFVVVGAGSAGCVLASRLTEDPNHRVLLLE. Lys438 is subject to N6-succinyllysine. An N6-acetyllysine; alternate mark is found at Lys486 and Lys498. An N6-succinyllysine; alternate mark is found at Lys486 and Lys498. Residue His513 is the Proton acceptor of the active site. Position 582 is an N6-acetyllysine (Lys582).

It belongs to the GMC oxidoreductase family. FAD is required as a cofactor. Acetylation of Lys-498 is observed in liver mitochondria from fasted mice but not from fed mice.

The protein resides in the mitochondrion inner membrane. The catalysed reaction is choline + A = betaine aldehyde + AH2. It participates in amine and polyamine biosynthesis; betaine biosynthesis via choline pathway; betaine aldehyde from choline (cytochrome c reductase route): step 1/1. The chain is Choline dehydrogenase, mitochondrial (Chdh) from Mus musculus (Mouse).